The primary structure comprises 194 residues: Putative manganese efflux pump MntP (194 aa).

6 helical membrane passes run 3–23, 37–57, 65–85, 112–132, 139–159, and 170–190; these read PITI…AAIG, LYVA…GWLL, IATF…IHMI, LAAT…SLAF, IVAA…VMLG, and AEIV…YEHL.

This sequence belongs to the MntP (TC 9.B.29) family.

It is found in the cell inner membrane. Functionally, probably functions as a manganese efflux pump. This chain is Putative manganese efflux pump MntP, found in Xylella fastidiosa (strain 9a5c).